Here is a 427-residue protein sequence, read N- to C-terminus: Enolase (427 aa).

Residue glutamine 163 participates in (2R)-2-phosphoglycerate binding. Glutamate 205 serves as the catalytic Proton donor. Aspartate 242, glutamate 285, and aspartate 312 together coordinate Mg(2+). Lysine 337, arginine 366, serine 367, and lysine 388 together coordinate (2R)-2-phosphoglycerate. The Proton acceptor role is filled by lysine 337.

This sequence belongs to the enolase family. Requires Mg(2+) as cofactor.

It localises to the cytoplasm. The protein resides in the secreted. It is found in the cell surface. It carries out the reaction (2R)-2-phosphoglycerate = phosphoenolpyruvate + H2O. It participates in carbohydrate degradation; glycolysis; pyruvate from D-glyceraldehyde 3-phosphate: step 4/5. Catalyzes the reversible conversion of 2-phosphoglycerate (2-PG) into phosphoenolpyruvate (PEP). It is essential for the degradation of carbohydrates via glycolysis. In Burkholderia thailandensis (strain ATCC 700388 / DSM 13276 / CCUG 48851 / CIP 106301 / E264), this protein is Enolase.